The sequence spans 311 residues: DNA replication terminus site-binding protein (311 aa).

This sequence belongs to the Tus family.

The protein resides in the cytoplasm. In terms of biological role, trans-acting protein required for termination of DNA replication. Binds to DNA replication terminator sequences (terA to terF) to prevent the passage of replication forks. The termination efficiency will be affected by the affinity of this protein for the terminator sequence. The protein is DNA replication terminus site-binding protein of Yersinia pseudotuberculosis serotype I (strain IP32953).